Here is a 289-residue protein sequence, read N- to C-terminus: Splicing factor C9orf78 homolog (289 aa).

A compositionally biased stretch (basic residues) spans 1–12; it reads MPVVRKIFRRRR. 2 disordered regions span residues 1-27 and 86-109; these read MPVV…SEEV and GKDK…TNRR. The interaction with SNRNP200 stretch occupies residues 5–58; that stretch reads RKIFRRRRGDSESEEDEQDSEEVRLKLEETREVQNLRKRPNGVSAVALLVGEKV. 2 positions are modified to phosphoserine: S15 and S17. Y147 bears the Phosphotyrosine mark. Positions 232-283 are enriched in basic and acidic residues; that stretch reads LNAPIRRNKEEPKARPLRVGDTEKPEPERSPPNRKRPANEKATDDYHYEKFK. The disordered stretch occupies residues 232 to 289; the sequence is LNAPIRRNKEEPKARPLRVGDTEKPEPERSPPNRKRPANEKATDDYHYEKFKKMNRRY. Residue T253 is modified to Phosphothreonine. Position 261 is a phosphoserine (S261).

This sequence belongs to the TLS1 family. Component of the spliceosome. Interacts with SNRNP200; the interaction is direct. Interacts with PRPF8.

Its subcellular location is the nucleus. The protein resides in the chromosome. The protein localises to the centromere. Functionally, plays a role in pre-mRNA splicing by promoting usage of the upstream 3'-splice site at alternative NAGNAG splice sites; these are sites featuring alternative acceptor motifs separated by only a few nucleotides. May also modulate exon inclusion events. Plays a role in spliceosomal remodeling by displacing WBP4 from SNRNP200 and may act to inhibit SNRNP200 helicase activity. Binds U5 snRNA. Required for proper chromosome segregation. Not required for splicing of shelterin components. The sequence is that of Splicing factor C9orf78 homolog from Pongo abelii (Sumatran orangutan).